The following is a 196-amino-acid chain: Small ribosomal subunit protein uS4c (196 aa).

The interval 22–42 (TRKTPKSGSNPKKKFHSGKKE) is disordered. Residues 89-169 (MRLDNILFRL…LPKHLTIDTL (81 aa)) enclose the S4 RNA-binding domain.

Belongs to the universal ribosomal protein uS4 family. In terms of assembly, part of the 30S ribosomal subunit. Contacts protein S5. The interaction surface between S4 and S5 is involved in control of translational fidelity.

It is found in the plastid. Its subcellular location is the chloroplast. In terms of biological role, one of the primary rRNA binding proteins, it binds directly to 16S rRNA where it nucleates assembly of the body of the 30S subunit. With S5 and S12 plays an important role in translational accuracy. This chain is Small ribosomal subunit protein uS4c (rps4), found in Melica altissima (Siberian melic grass).